Consider the following 720-residue polypeptide: Polyribonucleotide nucleotidyltransferase (720 aa).

Mg(2+) contacts are provided by aspartate 485 and aspartate 491. The KH domain maps to 552–615 (PRIHTIKINP…EAIRRIQALT (64 aa)). Residues 621–689 (GRIYEGKVTR…RQGRIRLSIK (69 aa)) form the S1 motif domain. The segment at 697–720 (PAAESVAESAPAQEAVVEQVPMTE) is disordered. Positions 698 to 720 (AAESVAESAPAQEAVVEQVPMTE) are enriched in low complexity.

It belongs to the polyribonucleotide nucleotidyltransferase family. In terms of assembly, component of the RNA degradosome, which is a multiprotein complex involved in RNA processing and mRNA degradation. Requires Mg(2+) as cofactor.

The protein resides in the cytoplasm. It catalyses the reaction RNA(n+1) + phosphate = RNA(n) + a ribonucleoside 5'-diphosphate. In terms of biological role, involved in mRNA degradation. Catalyzes the phosphorolysis of single-stranded polyribonucleotides processively in the 3'- to 5'-direction. The polypeptide is Polyribonucleotide nucleotidyltransferase (Tolumonas auensis (strain DSM 9187 / NBRC 110442 / TA 4)).